A 318-amino-acid chain; its full sequence is MNLVRTAMLLAFMTALFMFVGFLIGGRGGMMIAFLIAAGMNFFSYWNSDRMVLAAYRAHEIDERNAPEFFAIVRDLARNAGLPMPKVYLYDSPQPNAFATGRNPENAAVAASTGLLQALSPEEVAGVMAHELAHIQNRDTLTMTITATLAGAISMLGNFAFFFGGNRDNNNNPLGFVGVLVAMIVAPLAAMLVQMAISRTREYSADRRGAEICGNPLWLASALGKIARGAAHVPNEDAERNPATAHMFIINPLSGERMDNLFSTHPDTENRIAALQEMAQSGMNVSTGPVRAVNPTRKSRSVPNTGRGGSQPPRGPWS.

2 helical membrane-spanning segments follow: residues 6–26 and 28–48; these read TAMLLAFMTALFMFVGFLIGG and GGMMIAFLIAAGMNFFSYWNS. Zn(2+) is bound at residue His-130. The active site involves Glu-131. His-134 provides a ligand contact to Zn(2+). A run of 2 helical transmembrane segments spans residues 145-165 and 173-193; these read ITATLAGAISMLGNFAFFFGG and PLGFVGVLVAMIVAPLAAMLV. Glu-202 provides a ligand contact to Zn(2+). The interval 284–318 is disordered; the sequence is NVSTGPVRAVNPTRKSRSVPNTGRGGSQPPRGPWS.

It belongs to the peptidase M48B family. Zn(2+) is required as a cofactor.

The protein resides in the cell inner membrane. This Rhizobium etli (strain ATCC 51251 / DSM 11541 / JCM 21823 / NBRC 15573 / CFN 42) protein is Protease HtpX homolog.